Reading from the N-terminus, the 1515-residue chain is DNA topoisomerase 2-binding protein 1 (1515 aa).

BRCT domains follow at residues 101–189 and 195–284; these read VYNM…KYTD and FKCP…IYKA. Threonine 298 carries the phosphothreonine modification. 3 consecutive BRCT domains span residues 353 to 443, 551 to 636, and 644 to 741; these read APED…SYIH, REEG…SNPL, and SGVT…HFLV. The interaction with CIP2A stretch occupies residues 759 to 893; sequence VSSNPDLPAH…TDSHSASPQL (135 aa). Position 782 is a phosphothreonine (threonine 782). A disordered region spans residues 799 to 826; it reads SQQRGQDPTFPPVRQPLTKEPSLHLDTP. Threonine 851 bears the Phosphothreonine mark. A phosphoserine mark is found at serine 862, serine 863, serine 866, serine 888, and serine 890. The span at 880–891 shows a compositional bias: polar residues; that stretch reads SSRNTDSHSASP. The disordered stretch occupies residues 880–901; sequence SSRNTDSHSASPQLKGAHLEEE. One can recognise a BRCT 6 domain in the interval 902–993; sequence ETRKPLDSVV…KHLPESLYPH (92 aa). Residues 1020–1055 form a disordered region; it reads VSASKDDGPDHLSVEGNETNTMGTNDKESPLLNGSG. Positions 1023–1032 are enriched in basic and acidic residues; it reads SKDDGPDHLS. Residue threonine 1064 is modified to Phosphothreonine. Low complexity predominate over residues 1097–1116; sequence SRSSCNSASSTPDSARSVRS. 3 disordered regions span residues 1097-1119, 1203-1255, and 1491-1515; these read SRSS…SGRS, VTQA…TQEE, and KKGG…PRVH. Residues 1217–1229 are compositionally biased toward pro residues; sequence PPVAERPLIPEPQ. The 93-residue stretch at 1255–1347 folds into the BRCT 7 domain; it reads ETHRKVKKQY…RFVQEEDYEW (93 aa). Positions 1510–1513 match the Nuclear localization signal motif; that stretch reads KRPR.

It belongs to the TOPBP1 family. Interacts (via BRCT domains 1 and 2) with (phosphorylated) MDC1; promoting TOPBP1 recruitment to DNA damage sites during mitosis. Interacts (via BRCT domains 7 and 8) with (autophosphorylated) ATR; promoting activation of ATR. Interacts (via BRCT domains 7 and 8) with (phosphorylated) POLQ; specifically binds POLQ phosphorylated by PLK1, promoting POLQ recruitment to DNA damage sites. Interacts (via BRCT domains 1 and 2) with (phosphorylated) RAD9A. Interacts (via BRCT domain 2) with (phosphorylated) TP53BP1. Interacts (via BRCT domain 2) with (phosphorylated) HTATSF1. Interacts (via BRCT domains 7 and 8) with (phosphorylated) RAD51; promoting RAD51 recruitment to damaged chromatin. Interacts with CIP2A; forming the CIP2A-TOPBP1 complex. Interacts with POLE. Interacts with UBR5. Interacts with E2F1. Interacts with PML. Interacts with SMARCA2. Interacts with SMARCA4. Interacts with RHNO1. May interact with TOP2B. Interacts with TICRR. Interacts with HELB. In terms of processing, phosphorylated on serine and threonine residues in response to X-ray irradiation. Ubiquitinated and degraded by the proteasome. X-ray irradiation reduces ubiquitination. Deubiquitinated by USP13; leading to TOPBP1 stabilizion and activation of the ATR-TOPBP1 axis pathway. In terms of tissue distribution, highly expressed in testis.

The protein resides in the nucleus. Its subcellular location is the chromosome. The protein localises to the cytoplasm. It is found in the cytoskeleton. It localises to the microtubule organizing center. The protein resides in the centrosome. Its subcellular location is the spindle pole. Scaffold protein that acts as a key protein-protein adapter in DNA replication and DNA repair. Composed of multiple BRCT domains, which specifically recognize and bind phosphorylated proteins, bringing proteins together into functional combinations. Required for DNA replication initiation but not for the formation of pre-replicative complexes or the elongation stages. Necessary for the loading of replication factors onto chromatin, including GMNC, CDC45, DNA polymerases and components of the GINS complex. Plays a central role in DNA repair by bridging proteins and promoting recruitment of proteins to DNA damage sites. Involved in double-strand break (DSB) repair via homologous recombination in S-phase by promoting the exchange between the DNA replication factor A (RPA) complex and RAD51. Mechanistically, TOPBP1 is recruited to DNA damage sites in S-phase via interaction with phosphorylated HTATSF1, and promotes the loading of RAD51, thereby facilitating RAD51 nucleofilaments formation and RPA displacement, followed by homologous recombination. Involved in microhomology-mediated end-joining (MMEJ) DNA repair by promoting recruitment of polymerase theta (POLQ) to DNA damage sites during mitosis. MMEJ is an alternative non-homologous end-joining (NHEJ) machinery that takes place during mitosis to repair DSBs in DNA that originate in S-phase. Recognizes and binds POLQ phosphorylated by PLK1, enabling its recruitment to DSBs for subsequent repair. Involved in G1 DNA damage checkpoint by acting as a molecular adapter that couples TP53BP1 and the 9-1-1 complex. In response to DNA damage, triggers the recruitment of checkpoint signaling proteins on chromatin, which activate the CHEK1 signaling pathway and block S-phase progression. Acts as an activator of the kinase activity of ATR. Also required for chromosomal stability when DSBs occur during mitosis by forming filamentous assemblies that bridge MDC1 and tether broken chromosomes during mitosis. Together with CIP2A, plays an essential role in the response to genome instability generated by the presence of acentric chromosome fragments derived from shattered chromosomes within micronuclei. Micronuclei, which are frequently found in cancer cells, consist of chromatin surrounded by their own nuclear membrane: following breakdown of the micronuclear envelope, a process associated with chromothripsis, the CIP2A-TOPBP1 complex tethers chromosome fragments during mitosis to ensure clustered segregation of the fragments to a single daughter cell nucleus, facilitating re-ligation with limited chromosome scattering and loss. Recruits the SWI/SNF chromatin remodeling complex to E2F1-responsive promoters, thereby down-regulating E2F1 activity and inhibiting E2F1-dependent apoptosis during G1/S transition and after DNA damage. The sequence is that of DNA topoisomerase 2-binding protein 1 from Mus musculus (Mouse).